A 301-amino-acid polypeptide reads, in one-letter code: Probable alpha-L-glutamate ligase (301 aa).

The ATP-grasp domain maps to 104 to 287 (LQLLSRKGIG…VAGMIYEFIE (184 aa)). ATP is bound by residues K141, 178-179 (EF), D187, and 211-213 (RSN). 3 residues coordinate Mg(2+): D248, E260, and N262. Mn(2+) contacts are provided by D248, E260, and N262.

This sequence belongs to the RimK family. Mg(2+) is required as a cofactor. It depends on Mn(2+) as a cofactor.

The sequence is that of Probable alpha-L-glutamate ligase from Vibrio vulnificus (strain CMCP6).